A 143-amino-acid chain; its full sequence is Spliceosomal protein DIB1 (143 aa).

The residue at position 2 (A2) is an N-acetylalanine.

Belongs to the DIM1 family. As to quaternary structure, component of the U4/U6-U5 tri-snRNP complex composed of the U4, U6 and U5 snRNAs and at least PRP3, PRP4, PRP6, PRP8, PRP18, PRP31, PRP38, SNU13, SNU23, SNU66, SNU114, SPP381, SMB1, SMD1, SMD2, SMD3, SMX2, SMX3, LSM2, LSM3, LSM4, LSM5, LSM6, LSM7, LSM8, BRR2 and DIB1.

The protein resides in the nucleus. In terms of biological role, essential role in pre-mRNA splicing. Also essential for entry into mitosis (G2/M progression) as well as for chromosome segregation during mitosis. This is Spliceosomal protein DIB1 (DIB1) from Saccharomyces cerevisiae (strain ATCC 204508 / S288c) (Baker's yeast).